Reading from the N-terminus, the 339-residue chain is MIRAGIIGATGYTGLELVRLLKNHPEAKITYLSSRTYAGKKLEEVFPSTLENSILSEFDPEKVSKNCDVLFTALPAGASYDLVRELKGVKIIDLGADFRFDDPGVYREWYGKELSGYENIKRVYGLPELHREEIKNAQVVGNPGCYPTSVILALAPALKHNLVDPETILVDAKSGVSGAGRKEKVDYLFSEVNESLRPYNVAKHRHVPEMEQELGKISGKKVNVVFTPHLVPMTRGILSTIYVKTDKSLEEIHEAYLEFYRNEPFVHVLPMGIYPSTKWCYGSNHVFIGMQMEERTNTLILMSAIDNLVKGASGQAVQNMNIMFGLDETKGLEFTPIYP.

Cysteine 145 is a catalytic residue.

Belongs to the NAGSA dehydrogenase family. Type 1 subfamily.

The protein localises to the cytoplasm. It catalyses the reaction N-acetyl-L-glutamate 5-semialdehyde + phosphate + NADP(+) = N-acetyl-L-glutamyl 5-phosphate + NADPH + H(+). Its pathway is amino-acid biosynthesis; L-arginine biosynthesis; N(2)-acetyl-L-ornithine from L-glutamate: step 3/4. Catalyzes the NADPH-dependent reduction of N-acetyl-5-glutamyl phosphate to yield N-acetyl-L-glutamate 5-semialdehyde. The chain is N-acetyl-gamma-glutamyl-phosphate reductase from Thermotoga sp. (strain RQ2).